The following is a 134-amino-acid chain: Putative membrane protein insertion efficiency factor (134 aa).

It belongs to the UPF0161 family.

The protein localises to the cell inner membrane. Functionally, could be involved in insertion of integral membrane proteins into the membrane. In Rhizobium etli (strain ATCC 51251 / DSM 11541 / JCM 21823 / NBRC 15573 / CFN 42), this protein is Putative membrane protein insertion efficiency factor.